The chain runs to 235 residues: Small ribosomal subunit protein eS6 (235 aa).

Residues glycine 190–proline 212 form a disordered region.

The protein belongs to the eukaryotic ribosomal protein eS6 family.

This Aeropyrum pernix (strain ATCC 700893 / DSM 11879 / JCM 9820 / NBRC 100138 / K1) protein is Small ribosomal subunit protein eS6.